The following is a 418-amino-acid chain: Alditol oxidase (418 aa).

The FAD-binding PCMH-type domain occupies 13–179 (ITYTAKELLR…TSLTLDLEPA (167 aa)). FAD contacts are provided by residues 41–47 (VLGSGHS), Ser-106, Ser-111, Gly-114, 118–121 (TGTH), and Val-169. His-46 is modified (pros-8alpha-FAD histidine). Ser-106 lines the D-sorbitol pocket. Ser-106 is a xylitol binding site. Residues Glu-320, Arg-322, and Thr-345 each contribute to the D-sorbitol site. Positions 320, 322, and 345 each coordinate xylitol. Arg-322 lines the FAD pocket. His-372 contacts FAD. Lys-375 contributes to the D-sorbitol binding site. Residue Lys-375 participates in xylitol binding.

The protein belongs to the oxygen-dependent FAD-linked oxidoreductase family. Monomer. The cofactor is FAD.

The enzyme catalyses an alditol + O2 = an aldose + H2O2. It catalyses the reaction xylitol + O2 = D-xylose + H2O2. It carries out the reaction D-sorbitol + O2 = D-glucose + H2O2. Oxidase that performs selective oxidation of the terminal primary hydroxyl group of several alditols, with a reduction of O2 to H2O2. Shows highest activity on xylitol and D-sorbitol, and a poor efficiency with D-mannitol and L-threitol. The protein is Alditol oxidase (xyoA) of Streptomyces coelicolor (strain ATCC BAA-471 / A3(2) / M145).